An 89-amino-acid polypeptide reads, in one-letter code: Small ribosomal subunit protein uS15 (89 aa).

This sequence belongs to the universal ribosomal protein uS15 family. Part of the 30S ribosomal subunit. Forms a bridge to the 50S subunit in the 70S ribosome, contacting the 23S rRNA.

Functionally, one of the primary rRNA binding proteins, it binds directly to 16S rRNA where it helps nucleate assembly of the platform of the 30S subunit by binding and bridging several RNA helices of the 16S rRNA. Its function is as follows. Forms an intersubunit bridge (bridge B4) with the 23S rRNA of the 50S subunit in the ribosome. In Janthinobacterium sp. (strain Marseille) (Minibacterium massiliensis), this protein is Small ribosomal subunit protein uS15.